Consider the following 246-residue polypeptide: 3'(2'),5'-bisphosphate nucleotidase CysQ (246 aa).

5 residues coordinate Mg(2+): Glu64, Asp83, Leu85, Asp86, and Asp205. Residue Glu64 coordinates substrate. Substrate is bound by residues 85–88 and Asp205; that span reads LDGT.

This sequence belongs to the inositol monophosphatase superfamily. CysQ family. Mg(2+) serves as cofactor.

The protein resides in the cell inner membrane. It catalyses the reaction adenosine 3',5'-bisphosphate + H2O = AMP + phosphate. Its function is as follows. Converts adenosine-3',5'-bisphosphate (PAP) to AMP. In Escherichia coli O157:H7, this protein is 3'(2'),5'-bisphosphate nucleotidase CysQ.